The sequence spans 507 residues: Histidine ammonia-lyase (507 aa).

The 5-imidazolinone (Ala-Gly) cross-link spans 141 to 143; that stretch reads ASG. The residue at position 142 (Ser142) is a 2,3-didehydroalanine (Ser).

It belongs to the PAL/histidase family. Post-translationally, contains an active site 4-methylidene-imidazol-5-one (MIO), which is formed autocatalytically by cyclization and dehydration of residues Ala-Ser-Gly.

It is found in the cytoplasm. It carries out the reaction L-histidine = trans-urocanate + NH4(+). It functions in the pathway amino-acid degradation; L-histidine degradation into L-glutamate; N-formimidoyl-L-glutamate from L-histidine: step 1/3. This is Histidine ammonia-lyase from Cereibacter sphaeroides (strain KD131 / KCTC 12085) (Rhodobacter sphaeroides).